The primary structure comprises 508 residues: MFPIFLQMAVWRPSETKVYLPPTPVSKVVPTDAYVKRTNIFYHAGSSRLLAVGHPYYSISKAGNSKTDVPKVSAFQYRVFRVRLPDPNKFGLPDTNVFNPEQERLVWACVGLEIGRGQPLGVGVSGNPLFNKLDDTESSTIANQDTAEDSRDNISVDPKQTQLCIIGCTPAIGEHWAKGTACRSAPPAQGDCPPLELVNSPIQDGDMVDIGFGAMDFKTLQESKSDVPLDISQSTCKYPDYLKMSADAYGDSMWFYLRREQLFARHYFNRAGAIGEQLPSTLYIKGTNNRDPPPSSVYVATPSGSMVTSEAQLFNKPYWLQRAQGHNNGICWGNQVFVTVVDTTRNTNMTISATTQTLSTYNSSQIKQYVRHVEEYELQFVFQLCKISLSAETMAYLHTMNSTLLEGWNIGLSPPAATSLEDKYRYVKSLAITCQKDQPPAEKEDPLAKYKFWDVNLQDSFSADLDQFPLGRKFLMQLGVRTKPSTTTKKRSAPSSSTSTPSAKRKRR.

Positions 481-502 are enriched in low complexity; it reads RTKPSTTTKKRSAPSSSTSTPS. The disordered stretch occupies residues 481-508; sequence RTKPSTTTKKRSAPSSSTSTPSAKRKRR.

This sequence belongs to the papillomaviridae L1 protein family. As to quaternary structure, self-assembles into homopentamers. The capsid has an icosahedral symmetry and consists of 72 capsomers, with each capsomer being a pentamer of L1. Interacts with the minor capsid protein L2; this interaction is necessary for viral genome encapsidation. Interacts with protein E2; this interaction enhances E2-dependent replication and transcription activation.

The protein resides in the virion. Its subcellular location is the host nucleus. Its function is as follows. Forms an icosahedral capsid with a T=7 symmetry and a 50 nm diameter. The capsid is composed of 72 pentamers linked to each other by disulfide bonds and associated with L2 proteins. Binds to heparan sulfate proteoglycans on cell surface of basal layer keratinocytes to provide initial virion attachment. This binding mediates a conformational change in the virus capsid that facilitates efficient infection. The virion enters the host cell via endocytosis. During virus trafficking, L1 protein dissociates from the viral DNA and the genomic DNA is released to the host nucleus. The virion assembly takes place within the cell nucleus. Encapsulates the genomic DNA together with protein L2. The chain is Major capsid protein L1 from Homo sapiens (Human).